Here is a 170-residue protein sequence, read N- to C-terminus: MSLPDPAELIRQMATDLNAHLSKRGISDPRFIGIRTGGVWVAQALLKALNNPAPLGTLDVSFYRDDFSQNGLHPQVRPSDLPFEIEGQHLVLIDDVLMSGRTVRAALNELFDYGRPASVTLVCLLDLDAGELPIRPNVVGATLSLAPDERIKLSGPEPLALELQDLSTAL.

The PRPP-binding motif lies at 90 to 102 (LVLIDDVLMSGRT).

This sequence belongs to the purine/pyrimidine phosphoribosyltransferase family. PyrR subfamily.

It catalyses the reaction UMP + diphosphate = 5-phospho-alpha-D-ribose 1-diphosphate + uracil. Functionally, regulates the transcription of the pyrimidine nucleotide (pyr) operon in response to exogenous pyrimidines. Also displays a weak uracil phosphoribosyltransferase activity which is not physiologically significant. This is Bifunctional protein PyrR from Pseudomonas savastanoi pv. phaseolicola (strain 1448A / Race 6) (Pseudomonas syringae pv. phaseolicola (strain 1448A / Race 6)).